The following is a 455-amino-acid chain: Putative PTS system EIIBC component YbbF (455 aa).

One can recognise a PTS EIIB type-1 domain in the interval 8–90; that stretch reads HHLAQKILEL…SKLVSAEEGA (83 aa). Residue Cys30 is the Phosphocysteine intermediate; for EIIB activity of the active site. The PTS EIIC type-1 domain occupies 116–455; that stretch reads RKIASIFIPL…YKDEMASQFD (340 aa). 10 helical membrane-spanning segments follow: residues 118–138, 154–174, 181–201, 210–230, 250–270, 281–301, 325–345, 355–375, 399–419, and 423–443; these read IASI…ITGI, IAII…ILVG, FGGT…PEIA, LLPG…IAYT, VSLL…GGFI, ILDI…LPLV, LLPI…AVFV, AIAG…IFGV, YFQV…FLVL, and IILY…LTYA.

The protein localises to the cell membrane. Its function is as follows. The phosphoenolpyruvate-dependent sugar phosphotransferase system (sugar PTS), a major carbohydrate active -transport system, catalyzes the phosphorylation of incoming sugar substrates concomitantly with their translocation across the cell membrane. The protein is Putative PTS system EIIBC component YbbF (ybbF) of Bacillus subtilis (strain 168).